A 212-amino-acid polypeptide reads, in one-letter code: FMN-dependent NADH:quinone oxidoreductase (212 aa).

FMN-binding positions include serine 10, serine 16–serine 18, and methionine 98–phenylalanine 101.

This sequence belongs to the azoreductase type 1 family. As to quaternary structure, homodimer. It depends on FMN as a cofactor.

The catalysed reaction is 2 a quinone + NADH + H(+) = 2 a 1,4-benzosemiquinone + NAD(+). It catalyses the reaction N,N-dimethyl-1,4-phenylenediamine + anthranilate + 2 NAD(+) = 2-(4-dimethylaminophenyl)diazenylbenzoate + 2 NADH + 2 H(+). In terms of biological role, quinone reductase that provides resistance to thiol-specific stress caused by electrophilic quinones. Functionally, also exhibits azoreductase activity. Catalyzes the reductive cleavage of the azo bond in aromatic azo compounds to the corresponding amines. The sequence is that of FMN-dependent NADH:quinone oxidoreductase from Desulfotalea psychrophila (strain LSv54 / DSM 12343).